Here is a 250-residue protein sequence, read N- to C-terminus: 7-carboxy-7-deazaguanine synthase (250 aa).

Residues valine 15–glycine 17 and arginine 30 each bind substrate. Positions leucine 21 to leucine 250 constitute a Radical SAM core domain. Positions 34, 38, and 41 each coordinate [4Fe-4S] cluster. Residue threonine 43 participates in Mg(2+) binding. Threonine 96 is a binding site for substrate. Glycine 98 contributes to the S-adenosyl-L-methionine binding site.

This sequence belongs to the radical SAM superfamily. 7-carboxy-7-deazaguanine synthase family. As to quaternary structure, homodimer. Requires [4Fe-4S] cluster as cofactor. S-adenosyl-L-methionine serves as cofactor. The cofactor is Mg(2+).

It carries out the reaction 6-carboxy-5,6,7,8-tetrahydropterin + H(+) = 7-carboxy-7-deazaguanine + NH4(+). Its pathway is purine metabolism; 7-cyano-7-deazaguanine biosynthesis. Its function is as follows. Catalyzes the complex heterocyclic radical-mediated conversion of 6-carboxy-5,6,7,8-tetrahydropterin (CPH4) to 7-carboxy-7-deazaguanine (CDG), a step common to the biosynthetic pathways of all 7-deazapurine-containing compounds. This is 7-carboxy-7-deazaguanine synthase from Geobacter sulfurreducens (strain ATCC 51573 / DSM 12127 / PCA).